A 735-amino-acid polypeptide reads, in one-letter code: Muskelin (735 aa).

Alanine 2 carries the N-acetylalanine modification. The LisH domain maps to 172-204; that stretch reads REQEAIRLCLKHFRQHNYTEAFESLQKKTKIAL. The CTLH domain occupies 206–258; sequence HPMLTDIHDKLVLKGDFDACEELIEKAVNDGLFNQYISQQEYKPRWSQIIPKS. 6 Kelch repeats span residues 284-330, 339-391, 408-458, 469-515, 526-578, and 597-651; these read TVYL…SCHK, QIYT…FDHQ, ILTC…SRIG, CLYV…TGFT, EIHV…SLQE, and VHYL…AQVD.

In terms of assembly, homodimer; may form higher oligomers. Identified in the CTLH complex that contains GID4, RANBP9 and/or RANBP10, MKLN1, MAEA, RMND5A (or alternatively its paralog RMND5B), GID8, ARMC8, WDR26 and YPEL5. Within this complex, MAEA, RMND5A (or alternatively its paralog RMND5B), GID8, WDR26, and RANBP9 and/or RANBP10 form the catalytic core, while GID4, MKLN1, ARMC8 and YPEL5 have ancillary roles. Interacts with RANBP9. Part of a complex consisting of RANBP9, MKLN1 and GID8. Interacts with GABRA1. Interacts with the C-terminal tail of PTGER3.

The protein resides in the cytoplasm. The protein localises to the cytosol. Its subcellular location is the nucleus. It localises to the nucleoplasm. It is found in the cell projection. The protein resides in the ruffle. The protein localises to the cell cortex. Its subcellular location is the synapse. It localises to the postsynapse. In terms of biological role, component of the CTLH E3 ubiquitin-protein ligase complex that selectively accepts ubiquitin from UBE2H and mediates ubiquitination and subsequent proteasomal degradation of the transcription factor HBP1. Required for internalization of the GABA receptor GABRA1 from the cell membrane via endosomes and subsequent GABRA1 degradation. Acts as a mediator of cell spreading and cytoskeletal responses to the extracellular matrix component THBS1. This chain is Muskelin (MKLN1), found in Homo sapiens (Human).